We begin with the raw amino-acid sequence, 289 residues long: Bis(5'-nucleosyl)-tetraphosphatase, symmetrical (289 aa).

This sequence belongs to the Ap4A hydrolase family.

The enzyme catalyses P(1),P(4)-bis(5'-adenosyl) tetraphosphate + H2O = 2 ADP + 2 H(+). Its function is as follows. Hydrolyzes diadenosine 5',5'''-P1,P4-tetraphosphate to yield ADP. This chain is Bis(5'-nucleosyl)-tetraphosphatase, symmetrical, found in Yersinia pseudotuberculosis serotype O:1b (strain IP 31758).